A 425-amino-acid polypeptide reads, in one-letter code: Alpha/beta hydrolase xenA (425 aa).

The active site involves Asp-366.

This sequence belongs to the AB hydrolase superfamily. FUS2 hydrolase family. In terms of assembly, homodimer.

It functions in the pathway mycotoxin biosynthesis. Its function is as follows. Alpha/beta hydrolase; part of the gene cluster that mediates the biosynthesis of xenoacremones such as xenoacremone A, a compound that shows inhibitory activity toward the PI3K/AKT signaling pathway and which has the ability to induce apoptosis of A549 lung cancer cells. Within the pathway, cooperation of the hybrid PKS-NRPS xenE and the trans-acting enoyl reductase xenG is responsible for the formation of the reduced tyrosine-nonaketide derivative. The alpha/beta hydrolase xenA then accelerates intramolecular nucleophilic attack to give a pyrrolidone derivative. Subsequently, three enzymes, xenF, xenD, and xenC, coordinately participate in the conversion to xenoacremone B. XenF catalyzes sigmatropic rearrangement to form an A-ring, which leads to an unusual intermediate with a hexane ring, which is required for the formation of the tricarbocyclic product. Epoxidation catalyzed by xenD and the formation of the paracyclophane ether catalyzed by xenC initiate a spontaneous intramolecular Diels-Alder (IMDA) reaction to yield xenoacremone B. Spontaneous hydration of xenoacremone B leads to the formation of xenoacremone A, which undergoes subsequent methylation to afford xenoacremone C. This Xenoacremonium sinensis (Endophyte fungus) protein is Alpha/beta hydrolase xenA.